Consider the following 353-residue polypeptide: Photosystem II protein D1 (353 aa).

An N-acetylthreonine modification is found at T2. T2 carries the phosphothreonine modification. The next 3 membrane-spanning stretches (helical) occupy residues Y29–S46, H118–L133, and W142–A156. Residue H118 coordinates chlorophyll a. Pheophytin a is bound at residue Y126. [CaMn4O5] cluster is bound by residues D170 and E189. Residues F197 to L218 traverse the membrane as a helical segment. H198 provides a ligand contact to chlorophyll a. Residues H215 and S264–F265 each bind a quinone. H215 is a binding site for Fe cation. H272 lines the Fe cation pocket. Residues F274–L288 traverse the membrane as a helical segment. [CaMn4O5] cluster contacts are provided by H332, E333, D342, and A344. The propeptide occupies A345 to G353.

This sequence belongs to the reaction center PufL/M/PsbA/D family. As to quaternary structure, PSII is composed of 1 copy each of membrane proteins PsbA, PsbB, PsbC, PsbD, PsbE, PsbF, PsbH, PsbI, PsbJ, PsbK, PsbL, PsbM, PsbT, PsbX, PsbY, PsbZ, Psb30/Ycf12, at least 3 peripheral proteins of the oxygen-evolving complex and a large number of cofactors. It forms dimeric complexes. The D1/D2 heterodimer binds P680, chlorophylls that are the primary electron donor of PSII, and subsequent electron acceptors. It shares a non-heme iron and each subunit binds pheophytin, quinone, additional chlorophylls, carotenoids and lipids. D1 provides most of the ligands for the Mn4-Ca-O5 cluster of the oxygen-evolving complex (OEC). There is also a Cl(-1) ion associated with D1 and D2, which is required for oxygen evolution. The PSII complex binds additional chlorophylls, carotenoids and specific lipids. is required as a cofactor. In terms of processing, tyr-161 forms a radical intermediate that is referred to as redox-active TyrZ, YZ or Y-Z. C-terminally processed by CTPA; processing is essential to allow assembly of the oxygen-evolving complex and thus photosynthetic growth.

It is found in the plastid. It localises to the chloroplast thylakoid membrane. The catalysed reaction is 2 a plastoquinone + 4 hnu + 2 H2O = 2 a plastoquinol + O2. Functionally, photosystem II (PSII) is a light-driven water:plastoquinone oxidoreductase that uses light energy to abstract electrons from H(2)O, generating O(2) and a proton gradient subsequently used for ATP formation. It consists of a core antenna complex that captures photons, and an electron transfer chain that converts photonic excitation into a charge separation. The D1/D2 (PsbA/PsbD) reaction center heterodimer binds P680, the primary electron donor of PSII as well as several subsequent electron acceptors. The polypeptide is Photosystem II protein D1 (Eucalyptus globulus subsp. globulus (Tasmanian blue gum)).